The sequence spans 100 residues: Integration host factor subunit alpha (100 aa).

The protein belongs to the bacterial histone-like protein family. In terms of assembly, heterodimer of an alpha and a beta chain.

In terms of biological role, this protein is one of the two subunits of integration host factor, a specific DNA-binding protein that functions in genetic recombination as well as in transcriptional and translational control. This is Integration host factor subunit alpha from Ruegeria pomeroyi (strain ATCC 700808 / DSM 15171 / DSS-3) (Silicibacter pomeroyi).